Consider the following 448-residue polypeptide: tRNA modification GTPase MnmE (448 aa).

The (6S)-5-formyl-5,6,7,8-tetrahydrofolate site is built by arginine 22, glutamate 83, and arginine 122. The TrmE-type G domain maps to 219-369; the sequence is GVKTVIVGRP…LESEILKTLK (151 aa). K(+) is bound at residue asparagine 229. Residues 229–234, 248–254, and 273–276 each bind GTP; these read NVGKSS, SDIAGTT, and DTAG. Serine 233 is a binding site for Mg(2+). K(+) contacts are provided by serine 248, isoleucine 250, and threonine 253. Position 254 (threonine 254) interacts with Mg(2+). Lysine 448 contributes to the (6S)-5-formyl-5,6,7,8-tetrahydrofolate binding site.

It belongs to the TRAFAC class TrmE-Era-EngA-EngB-Septin-like GTPase superfamily. TrmE GTPase family. Homodimer. Heterotetramer of two MnmE and two MnmG subunits. It depends on K(+) as a cofactor.

Its subcellular location is the cytoplasm. Functionally, exhibits a very high intrinsic GTPase hydrolysis rate. Involved in the addition of a carboxymethylaminomethyl (cmnm) group at the wobble position (U34) of certain tRNAs, forming tRNA-cmnm(5)s(2)U34. The sequence is that of tRNA modification GTPase MnmE from Acholeplasma laidlawii (strain PG-8A).